Consider the following 476-residue polypeptide: NADH-quinone oxidoreductase subunit N (476 aa).

14 helical membrane-spanning segments follow: residues 4-24 (LLAL…MLTI), 32-52 (LTAT…VVAW), 67-87 (GLAV…ATLG), 100-117 (EYYL…ALVS), 121-141 (LAAL…MLAY), 155-175 (YMVL…LLYS), 198-218 (LMAG…IVPF), 230-250 (PAPA…LVLL), 263-283 (LHSL…LLAL), 291-311 (LLGY…VVND), 319-339 (ALYL…VTLL), 366-386 (AVLT…GFIG), 406-426 (VVAG…TLFL), and 447-467 (VVVL…APMI).

The protein belongs to the complex I subunit 2 family. As to quaternary structure, NDH-1 is composed of 14 different subunits. Subunits NuoA, H, J, K, L, M, N constitute the membrane sector of the complex.

Its subcellular location is the cell inner membrane. It carries out the reaction a quinone + NADH + 5 H(+)(in) = a quinol + NAD(+) + 4 H(+)(out). NDH-1 shuttles electrons from NADH, via FMN and iron-sulfur (Fe-S) centers, to quinones in the respiratory chain. The immediate electron acceptor for the enzyme in this species is believed to be ubiquinone. Couples the redox reaction to proton translocation (for every two electrons transferred, four hydrogen ions are translocated across the cytoplasmic membrane), and thus conserves the redox energy in a proton gradient. This chain is NADH-quinone oxidoreductase subunit N, found in Chromohalobacter salexigens (strain ATCC BAA-138 / DSM 3043 / CIP 106854 / NCIMB 13768 / 1H11).